The sequence spans 683 residues: ATP-dependent zinc metalloprotease FtsH 2 (683 aa).

A compositionally biased stretch (polar residues) spans 1-12 (MADQTSQNDNQN). The segment at 1–21 (MADQTSQNDNQNGSGLPGGGP) is disordered. Residues 1-28 (MADQTSQNDNQNGSGLPGGGPSGTGRGR) are Cytoplasmic-facing. A helical transmembrane segment spans residues 29-49 (LIIWVIAGTLLALWAYSYWGM). Topologically, residues 50 to 136 (GASGGERISY…VTKPESSFPW (87 aa)) are periplasmic. A helical membrane pass occupies residues 137-157 (GLVIMGLLPVLLLFGVGYIFL). Topologically, residues 158–683 (RRMQSQGQGL…ASGSADASGS (526 aa)) are cytoplasmic. 228-235 (GPPGTGKT) lines the ATP pocket. His-450 contacts Zn(2+). Glu-451 is an active-site residue. His-454 and Asp-526 together coordinate Zn(2+). The interval 627 to 683 (VNGDTDEIGHMPTTNGAAASEENGSADDHEPDEATVIEEDGESGEGRASGSADASGS) is disordered. Acidic residues predominate over residues 655–669 (HEPDEATVIEEDGES). The span at 672 to 683 (GRASGSADASGS) shows a compositional bias: low complexity.

It in the central section; belongs to the AAA ATPase family. The protein in the C-terminal section; belongs to the peptidase M41 family. In terms of assembly, homohexamer. Zn(2+) is required as a cofactor.

The protein localises to the cell inner membrane. Acts as a processive, ATP-dependent zinc metallopeptidase for both cytoplasmic and membrane proteins. Plays a role in the quality control of integral membrane proteins. The protein is ATP-dependent zinc metalloprotease FtsH 2 of Salinibacter ruber (strain M8).